Consider the following 970-residue polypeptide: Protein translocase subunit SecA (970 aa).

Residues Q99, 117 to 121 (GEGKT), and D631 each bind ATP.

It belongs to the SecA family. Monomer and homodimer. Part of the essential Sec protein translocation apparatus which comprises SecA, SecYEG and auxiliary proteins SecDF. Other proteins may also be involved.

It localises to the cell inner membrane. Its subcellular location is the cytoplasm. It carries out the reaction ATP + H2O + cellular proteinSide 1 = ADP + phosphate + cellular proteinSide 2.. In terms of biological role, part of the Sec protein translocase complex. Interacts with the SecYEG preprotein conducting channel. Has a central role in coupling the hydrolysis of ATP to the transfer of proteins into and across the cell membrane, serving as an ATP-driven molecular motor driving the stepwise translocation of polypeptide chains across the membrane. In Chlamydia pneumoniae (Chlamydophila pneumoniae), this protein is Protein translocase subunit SecA.